The following is a 101-amino-acid chain: Urease subunit beta (101 aa).

This sequence belongs to the urease beta subunit family. In terms of assembly, heterotrimer of UreA (gamma), UreB (beta) and UreC (alpha) subunits. Three heterotrimers associate to form the active enzyme.

Its subcellular location is the cytoplasm. The enzyme catalyses urea + 2 H2O + H(+) = hydrogencarbonate + 2 NH4(+). It participates in nitrogen metabolism; urea degradation; CO(2) and NH(3) from urea (urease route): step 1/1. This chain is Urease subunit beta, found in Sinorhizobium medicae (strain WSM419) (Ensifer medicae).